The primary structure comprises 214 residues: Riboflavin kinase (214 aa).

The interval 1–26 (MRPDGPRDPVVGPDSGPEPPYPVRLS) is disordered. Mg(2+) contacts are provided by Thr44 and Asn46. The active-site Nucleophile is the Glu112.

Belongs to the flavokinase family. It depends on Zn(2+) as a cofactor. Requires Mg(2+) as cofactor.

The catalysed reaction is riboflavin + ATP = FMN + ADP + H(+). Its pathway is cofactor biosynthesis; FMN biosynthesis; FMN from riboflavin (ATP route): step 1/1. Functionally, catalyzes the phosphorylation of riboflavin (vitamin B2) to form flavin mononucleotide (FMN) coenzyme. This Aspergillus clavatus (strain ATCC 1007 / CBS 513.65 / DSM 816 / NCTC 3887 / NRRL 1 / QM 1276 / 107) protein is Riboflavin kinase (fmn1).